The sequence spans 186 residues: ATP synthase subunit delta (186 aa).

Belongs to the ATPase delta chain family. F-type ATPases have 2 components, F(1) - the catalytic core - and F(0) - the membrane proton channel. F(1) has five subunits: alpha(3), beta(3), gamma(1), delta(1), epsilon(1). F(0) has three main subunits: a(1), b(2) and c(10-14). The alpha and beta chains form an alternating ring which encloses part of the gamma chain. F(1) is attached to F(0) by a central stalk formed by the gamma and epsilon chains, while a peripheral stalk is formed by the delta and b chains.

The protein localises to the cell inner membrane. In terms of biological role, f(1)F(0) ATP synthase produces ATP from ADP in the presence of a proton or sodium gradient. F-type ATPases consist of two structural domains, F(1) containing the extramembraneous catalytic core and F(0) containing the membrane proton channel, linked together by a central stalk and a peripheral stalk. During catalysis, ATP synthesis in the catalytic domain of F(1) is coupled via a rotary mechanism of the central stalk subunits to proton translocation. Its function is as follows. This protein is part of the stalk that links CF(0) to CF(1). It either transmits conformational changes from CF(0) to CF(1) or is implicated in proton conduction. This chain is ATP synthase subunit delta, found in Ruegeria sp. (strain TM1040) (Silicibacter sp.).